Here is a 336-residue protein sequence, read N- to C-terminus: Tetraacyldisaccharide 4'-kinase (336 aa).

Ala-58–Thr-65 contacts ATP.

The protein belongs to the LpxK family.

The enzyme catalyses a lipid A disaccharide + ATP = a lipid IVA + ADP + H(+). The protein operates within glycolipid biosynthesis; lipid IV(A) biosynthesis; lipid IV(A) from (3R)-3-hydroxytetradecanoyl-[acyl-carrier-protein] and UDP-N-acetyl-alpha-D-glucosamine: step 6/6. Its function is as follows. Transfers the gamma-phosphate of ATP to the 4'-position of a tetraacyldisaccharide 1-phosphate intermediate (termed DS-1-P) to form tetraacyldisaccharide 1,4'-bis-phosphate (lipid IVA). In Aromatoleum aromaticum (strain DSM 19018 / LMG 30748 / EbN1) (Azoarcus sp. (strain EbN1)), this protein is Tetraacyldisaccharide 4'-kinase.